The sequence spans 48 residues: Cuticle protein 6 isoform b (48 aa).

The chain is Cuticle protein 6 isoform b from Limulus polyphemus (Atlantic horseshoe crab).